Consider the following 428-residue polypeptide: GTPase Obg (428 aa).

The region spanning 1 to 158 is the Obg domain; sequence MFIDKAKVFI…LSIVLELKLL (158 aa). In terms of domain architecture, OBG-type G spans 159 to 331; the sequence is ADVGLLGFPN…VIKEAARMLK (173 aa). GTP-binding positions include 165-172, 190-194, 212-215, 282-285, and 312-314; these read GFPNVGKS, FTTLK, DIPG, NKSD, and SAA. Mg(2+) is bound by residues Ser-172 and Thr-192. The OCT domain occupies 345 to 428; the sequence is MYIPEEKRFT…LNDFEFEYLL (84 aa).

This sequence belongs to the TRAFAC class OBG-HflX-like GTPase superfamily. OBG GTPase family. Monomer. The cofactor is Mg(2+).

It localises to the cytoplasm. An essential GTPase which binds GTP, GDP and possibly (p)ppGpp with moderate affinity, with high nucleotide exchange rates and a fairly low GTP hydrolysis rate. Plays a role in control of the cell cycle, stress response, ribosome biogenesis and in those bacteria that undergo differentiation, in morphogenesis control. The sequence is that of GTPase Obg from Clostridium botulinum (strain Eklund 17B / Type B).